The primary structure comprises 249 residues: Isoprenyl transferase (249 aa).

Residue Asp-25 is part of the active site. A Mg(2+)-binding site is contributed by Asp-25. Substrate-binding positions include 26-29 (GNGR), Trp-30, Arg-38, His-42, and 70-72 (STE). Asn-73 serves as the catalytic Proton acceptor. Residues Trp-74, Arg-76, Arg-197, and 203–205 (RLS) each bind substrate. Glu-216 is a Mg(2+) binding site.

Belongs to the UPP synthase family. As to quaternary structure, homodimer. It depends on Mg(2+) as a cofactor.

Functionally, catalyzes the condensation of isopentenyl diphosphate (IPP) with allylic pyrophosphates generating different type of terpenoids. This is Isoprenyl transferase from Streptococcus pyogenes serotype M1.